A 615-amino-acid polypeptide reads, in one-letter code: Chaperone protein HscA homolog (615 aa).

The protein belongs to the heat shock protein 70 family.

In terms of biological role, chaperone involved in the maturation of iron-sulfur cluster-containing proteins. Has a low intrinsic ATPase activity which is markedly stimulated by HscB. The sequence is that of Chaperone protein HscA homolog from Aeromonas salmonicida (strain A449).